Here is a 724-residue protein sequence, read N- to C-terminus: 1,4-alpha-glucan branching enzyme GlgB 1 (724 aa).

The Nucleophile role is filled by Asp403. Glu456 acts as the Proton donor in catalysis.

Belongs to the glycosyl hydrolase 13 family. GlgB subfamily. As to quaternary structure, monomer.

It catalyses the reaction Transfers a segment of a (1-&gt;4)-alpha-D-glucan chain to a primary hydroxy group in a similar glucan chain.. Its pathway is glycan biosynthesis; glycogen biosynthesis. Catalyzes the formation of the alpha-1,6-glucosidic linkages in glycogen by scission of a 1,4-alpha-linked oligosaccharide from growing alpha-1,4-glucan chains and the subsequent attachment of the oligosaccharide to the alpha-1,6 position. This Xanthomonas axonopodis pv. citri (strain 306) protein is 1,4-alpha-glucan branching enzyme GlgB 1 (glgB1).